Here is a 115-residue protein sequence, read N- to C-terminus: Cell division topological specificity factor (115 aa).

A disordered region spans residues 89–115 (TGQIQLKEPKNQSEVDSPETEGKDQNS).

The protein belongs to the MinE family.

Prevents the cell division inhibition by proteins MinC and MinD at internal division sites while permitting inhibition at polar sites. This ensures cell division at the proper site by restricting the formation of a division septum at the midpoint of the long axis of the cell. The chain is Cell division topological specificity factor from Prochlorococcus marinus (strain NATL2A).